Reading from the N-terminus, the 1234-residue chain is Anion exchange protein 2 (1234 aa).

Residues 1-239 (MSSAPRRPAS…YNLQERRRIG (239 aa)) form a disordered region. Topologically, residues 1 to 704 (MSSAPRRPAS…SDFRDALDPQ (704 aa)) are cytoplasmic. Composition is skewed to basic and acidic residues over residues 39 to 49 (LRTLGVERFEE) and 58 to 75 (GGEEPGRSYGEEDFEYHR). Composition is skewed to basic residues over residues 76 to 85 (QSSHHIHHPL) and 94 to 110 (RRRKTPQGPGRKPRRRP). Ser-113 carries the post-translational modification Phosphoserine. Acidic residues predominate over residues 120 to 133 (TIEEGEEDEDEVGE). Phosphoserine is present on residues Ser-145, Ser-171, and Ser-173. A compositionally biased stretch (gly residues) spans 207 to 216 (TAGGDDGGAA). Ser-240 bears the Phosphoserine mark. Thr-254 is subject to Phosphothreonine. Position 271 is an N6-methyllysine (Lys-271). A disordered region spans residues 287–315 (RKNAKGSTQAAREGREPGPTPRARPRAPH). A Phosphoserine modification is found at Ser-440. Residues 446–467 (SLLGHHHAQGTESDPHVTEPLI) form a disordered region. Helical transmembrane passes span 705-728 (CLAAVIFIYFAALSPAITFGGLLG), 734-771 (LIGVSELIMSTALQGVIFCLLGAQPLLVIGFSGPLLVF), 791-813 (VWIGFWLVLLALLMVALEGSFLV), and 823-843 (IFAFLISLIFIYETFYKLIKI). The membrane (anion exchange) stretch occupies residues 705–1234 (CLAAVIFIYF…DEYNEMPMPV (530 aa)). Over 844–893 (FQEHPLHGCSVSNDSEADSSSNNMTWAATTLAPDNSSASGQERPRGQPNT) the chain is Extracellular. N-linked (GlcNAc...) asparagine glycans are attached at residues Asn-856, Asn-866, and Asn-878. Residues 894 to 911 (ALLSLVLMAGTFFIAFFL) form a helical membrane-spanning segment. The Cytoplasmic segment spans residues 912–926 (RKFKNSRFFPGRIRR). Helical transmembrane passes span 927 to 947 (VIGDFGVPIAILIMVLVDYSI), 981 to 1003 (PFPVWMMVASLLPAVLVFILIFM), 1029 to 1050 (LLLIVAMGGICALFGLPWLAAA), 1084 to 1129 (VTGL…IQFY), and 1156 to 1192 (MHLFTALQLLCLALLWAVMSTAASLAFPFILILTVPL). Residue Cys-1166 is the site of S-palmitoyl cysteine attachment.

It belongs to the anion exchanger (TC 2.A.31) family. As to expression, expressed in the parotid and submandibular glands (at protein level). Expressed in the gastric mucosa (at protein level). Expressed in the choroid plexus epithelium (at protein level). Expressed in the liver and gallbladder.

It is found in the apical cell membrane. The protein resides in the basolateral cell membrane. The catalysed reaction is hydrogencarbonate(in) + chloride(out) = hydrogencarbonate(out) + chloride(in). Inhibited by 4,4'-diisothiocyanatostilbene-2,2'-disulfonic acid (DIDS). In terms of biological role, sodium-independent anion exchanger which mediates the electroneutral exchange of chloride for bicarbonate ions across the cell membrane. Plays an important role in osteoclast differentiation and function. Regulates bone resorption and calpain-dependent actin cytoskeleton organization in osteoclasts via anion exchange-dependent control of pH. Essential for intracellular pH regulation in CD8(+) T-cells upon CD3 stimulation, modulating CD8(+) T-cell responses. The polypeptide is Anion exchange protein 2 (Slc4a2) (Rattus norvegicus (Rat)).